Consider the following 289-residue polypeptide: Shikimate dehydrogenase (NADP(+)) (289 aa).

Shikimate-binding positions include 19–21 and Thr-66; that span reads SMS. Residue Lys-70 is the Proton acceptor of the active site. Positions 91 and 106 each coordinate shikimate. Residues 131–135, 155–160, and Leu-229 contribute to the NADP(+) site; these read GAGGA and NRTLKK. Residue Tyr-231 coordinates shikimate. Gly-252 provides a ligand contact to NADP(+).

This sequence belongs to the shikimate dehydrogenase family. Homodimer.

It catalyses the reaction shikimate + NADP(+) = 3-dehydroshikimate + NADPH + H(+). Its pathway is metabolic intermediate biosynthesis; chorismate biosynthesis; chorismate from D-erythrose 4-phosphate and phosphoenolpyruvate: step 4/7. Its function is as follows. Involved in the biosynthesis of the chorismate, which leads to the biosynthesis of aromatic amino acids. Catalyzes the reversible NADPH linked reduction of 3-dehydroshikimate (DHSA) to yield shikimate (SA). In Halothermothrix orenii (strain H 168 / OCM 544 / DSM 9562), this protein is Shikimate dehydrogenase (NADP(+)).